Reading from the N-terminus, the 280-residue chain is MWFLTTLLLWVPVDGQVDTTKAVITLQPPWVSVFQEETVTLHCEVLHLPGSSSTQWFLNGTATQTSTPSYRITSASVNDSGEYRCQRGLSGRSDPIQLEIHRGWLLLQVSSRVFMEGEPLALRCHAWKDKLVYNVLYYRNGKAFKFFHWNSNLTILKTNISHNGTYHCSGMGKHRYTSAGISQYTVKGLQLPTPVWFHVLFYLAVGIMFLVNTVLWVTIRKELKRKKKWNLEISLDSGHEKKVISSLQEDRHLEEELKCQEQKEEQLQEGVHRKEPQGAT.

An N-terminal signal peptide occupies residues 1-15 (MWFLTTLLLWVPVDG). Topologically, residues 16–198 (QVDTTKAVIT…LQLPTPVWFH (183 aa)) are extracellular. Ig-like C2-type domains are found at residues 22 to 101 (AVIT…LEIH) and 95 to 184 (PIQL…ISQY). Intrachain disulfides connect C43–C85 and C124–C168. N59, N152, and N163 each carry an N-linked (GlcNAc...) asparagine glycan. A helical membrane pass occupies residues 199–219 (VLFYLAVGIMFLVNTVLWVTI). Residues 220 to 280 (RKELKRKKKW…VHRKEPQGAT (61 aa)) are Cytoplasmic-facing. Residues 258–280 (KCQEQKEEQLQEGVHRKEPQGAT) form a disordered region.

It belongs to the immunoglobulin superfamily. FCGR1 family.

The protein resides in the cell membrane. Its function is as follows. May bind to the Fc region of immunoglobulins gamma with a low affinity compared to FCGR1A. May function in the humoral immune response. The sequence is that of Putative high affinity immunoglobulin gamma Fc receptor IB from Homo sapiens (Human).